The following is a 335-amino-acid chain: Replication factor C subunit 4 (335 aa).

An ATP-binding site is contributed by 56–63 (SGPPGTGK).

Belongs to the activator 1 small subunits family. Heterotetramer of subunits RFC2, RFC3, RFC4 and RFC5 that can form a complex with RFC1. As to expression, expressed in roots, leaves, shoot apical meristem (SAM), flag leaves and panicles.

The protein resides in the nucleus. Its function is as follows. May be involved in DNA replication and thus regulate cell proliferation. The protein is Replication factor C subunit 4 (RFC4) of Oryza sativa subsp. japonica (Rice).